An 82-amino-acid polypeptide reads, in one-letter code: U1-plectoxin-Pt1a (82 aa).

An N-terminal signal peptide occupies residues 1 to 20 (MKHLIFSSALVCALVVCTFA). Residues 21-33 (EEQVNVPFLPDER) constitute a propeptide that is removed on maturation. 5 cysteine pairs are disulfide-bonded: Cys-37-Cys-51, Cys-44-Cys-57, Cys-50-Cys-68, Cys-54-Cys-77, and Cys-59-Cys-66. Residue Ser-79 is the site of O-palmitoyl serine attachment. The propeptide occupies 80-82 (RRR).

The protein belongs to the neurotoxin 02 (plectoxin) family. 02 (plectoxin) subfamily. Plectoxin-5 presumably undergoes post-translational modification to give rise to plectoxin-6. In terms of tissue distribution, expressed by the venom gland.

The protein resides in the secreted. Its function is as follows. Potent toxin that may paralyze and/or kill insect pests such as H.virescens (lepidoptera), S.exigua (beet armyworm) and M.sexta (tobacco hornworm). This chain is U1-plectoxin-Pt1a, found in Plectreurys tristis (Spider).